Here is a 688-residue protein sequence, read N- to C-terminus: Translation initiation factor IF-2 (688 aa).

The disordered stretch occupies residues 62–103 (EFEVEEKVVRSKKNSNKKKKKGKGNEDKRQDNFAGRQQTQIV). The segment covering 71–83 (RSKKNSNKKKKKG) has biased composition (basic residues). A tr-type G domain is found at 190 to 359 (ERPAVVTIMG…LLVSEVEEYK (170 aa)). Positions 199–206 (GHVDHGKT) are G1. Residue 199 to 206 (GHVDHGKT) coordinates GTP. The segment at 224–228 (GITQH) is G2. The G3 stretch occupies residues 245–248 (DTPG). GTP is bound by residues 245–249 (DTPGH) and 299–302 (NKMD). The tract at residues 299 to 302 (NKMD) is G4. Positions 335-337 (SAI) are G5.

The protein belongs to the TRAFAC class translation factor GTPase superfamily. Classic translation factor GTPase family. IF-2 subfamily.

The protein resides in the cytoplasm. One of the essential components for the initiation of protein synthesis. Protects formylmethionyl-tRNA from spontaneous hydrolysis and promotes its binding to the 30S ribosomal subunits. Also involved in the hydrolysis of GTP during the formation of the 70S ribosomal complex. This is Translation initiation factor IF-2 from Bacillus cereus (strain G9842).